We begin with the raw amino-acid sequence, 259 residues long: DNA-directed RNA polymerase 30 kDa polypeptide (259 aa).

The segment at Tyr155–Lys195 adopts a TFIIS-type zinc-finger fold. Zn(2+)-binding residues include Cys159, Cys162, Cys187, and Cys190. The tract at residues Glu220–Glu259 is disordered. Positions Asn226–Ala236 are enriched in pro residues.

It belongs to the poxviridae DNA-directed RNA polymerase 30 kDa subunit family. In terms of assembly, the DNA-dependent RNA polymerase (vRNAP) consists of eight subunits encoded by early viral genes and termed according to their apparent molecular masses Rpo147, Rpo132, Rpo35, Rpo30, Rpo22, Rpo19, Rpo18, and Rpo7. The same holoenzyme, with the addition of the transcription-specificity factor RAP94, is used for early gene expression.

Its subcellular location is the virion. It localises to the host cytoplasm. It catalyses the reaction RNA(n) + a ribonucleoside 5'-triphosphate = RNA(n+1) + diphosphate. Part of the DNA-dependent RNA polymerase which catalyzes the transcription of viral DNA into RNA using the four ribonucleoside triphosphates as substrates. Responsible for the transcription of early, intermediate and late genes. DNA-dependent RNA polymerase associates with the early transcription factor (ETF), itself composed of OPG118 and OPG134, thereby allowing the early genes transcription. Late transcription, and probably also intermediate transcription, require newly synthesized RNA polymerase. The protein is DNA-directed RNA polymerase 30 kDa polypeptide (OPG066) of Homo sapiens (Human).